A 155-amino-acid chain; its full sequence is Large ribosomal subunit protein uL13 (155 aa).

Belongs to the universal ribosomal protein uL13 family. Part of the 50S ribosomal subunit.

This protein is one of the early assembly proteins of the 50S ribosomal subunit, although it is not seen to bind rRNA by itself. It is important during the early stages of 50S assembly. In Rickettsia rickettsii (strain Iowa), this protein is Large ribosomal subunit protein uL13.